The chain runs to 248 residues: 2,3-bisphosphoglycerate-dependent phosphoglycerate mutase (248 aa).

Substrate-binding positions include 8–15 (RHGESTWN), 21–22 (TG), Arg60, 87–90 (ERHY), Lys98, 114–115 (RR), and 183–184 (GN). His9 serves as the catalytic Tele-phosphohistidine intermediate. The Proton donor/acceptor role is filled by Glu87.

The protein belongs to the phosphoglycerate mutase family. BPG-dependent PGAM subfamily.

The catalysed reaction is (2R)-2-phosphoglycerate = (2R)-3-phosphoglycerate. It functions in the pathway carbohydrate degradation; glycolysis; pyruvate from D-glyceraldehyde 3-phosphate: step 3/5. In terms of biological role, catalyzes the interconversion of 2-phosphoglycerate and 3-phosphoglycerate. The polypeptide is 2,3-bisphosphoglycerate-dependent phosphoglycerate mutase (Solibacter usitatus (strain Ellin6076)).